We begin with the raw amino-acid sequence, 603 residues long: UvrABC system protein C (603 aa).

In terms of domain architecture, GIY-YIG spans 15–92 (DQPGCYLMKD…IKKHDPRFNI (78 aa)). Residues 197–232 (KTVKNDLMKKMQEAAENMEFEKAGEFRDQINAIETT) enclose the UVR domain.

Belongs to the UvrC family. As to quaternary structure, interacts with UvrB in an incision complex.

Its subcellular location is the cytoplasm. Functionally, the UvrABC repair system catalyzes the recognition and processing of DNA lesions. UvrC both incises the 5' and 3' sides of the lesion. The N-terminal half is responsible for the 3' incision and the C-terminal half is responsible for the 5' incision. In Listeria monocytogenes serotype 4a (strain HCC23), this protein is UvrABC system protein C.